A 529-amino-acid polypeptide reads, in one-letter code: Zinc metalloproteinase MspA (529 aa).

The N-terminal stretch at M1–A24 is a signal peptide. Residues A25–T204 constitute a propeptide that is removed on maturation. Residue H365 coordinates Zn(2+). E366 is a catalytic residue. Zn(2+)-binding residues include H369 and E389. H451 acts as the Proton donor in catalysis.

The protein belongs to the peptidase M4 family. It depends on Zn(2+) as a cofactor.

The sequence is that of Zinc metalloproteinase MspA (mspA) from Legionella longbeachae.